A 212-amino-acid chain; its full sequence is Ribosomal RNA small subunit methyltransferase G (212 aa).

Residues G80, L85, 131-132, and R146 each bind S-adenosyl-L-methionine; that span reads VE.

Belongs to the methyltransferase superfamily. RNA methyltransferase RsmG family.

The protein localises to the cytoplasm. It carries out the reaction guanosine(527) in 16S rRNA + S-adenosyl-L-methionine = N(7)-methylguanosine(527) in 16S rRNA + S-adenosyl-L-homocysteine. Its function is as follows. Specifically methylates the N7 position of guanine in position 527 of 16S rRNA. The sequence is that of Ribosomal RNA small subunit methyltransferase G from Azoarcus sp. (strain BH72).